Consider the following 423-residue polypeptide: 4-hydroxy-3-methylbut-2-en-1-yl diphosphate synthase (flavodoxin) (423 aa).

Cys307, Cys310, Cys353, and Glu360 together coordinate [4Fe-4S] cluster.

This sequence belongs to the IspG family. It depends on [4Fe-4S] cluster as a cofactor.

The catalysed reaction is (2E)-4-hydroxy-3-methylbut-2-enyl diphosphate + oxidized [flavodoxin] + H2O + 2 H(+) = 2-C-methyl-D-erythritol 2,4-cyclic diphosphate + reduced [flavodoxin]. The protein operates within isoprenoid biosynthesis; isopentenyl diphosphate biosynthesis via DXP pathway; isopentenyl diphosphate from 1-deoxy-D-xylulose 5-phosphate: step 5/6. Converts 2C-methyl-D-erythritol 2,4-cyclodiphosphate (ME-2,4cPP) into 1-hydroxy-2-methyl-2-(E)-butenyl 4-diphosphate. The protein is 4-hydroxy-3-methylbut-2-en-1-yl diphosphate synthase (flavodoxin) of Brucella anthropi (strain ATCC 49188 / DSM 6882 / CCUG 24695 / JCM 21032 / LMG 3331 / NBRC 15819 / NCTC 12168 / Alc 37) (Ochrobactrum anthropi).